The following is a 232-amino-acid chain: Golgi SNAP receptor complex member 1 (232 aa).

Residues 1-211 are Cytoplasmic-facing; sequence MGGSSYDVLR…QRINIKKRRD (211 aa). Coiled coils occupy residues 6–23 and 52–80; these read YDVL…IDLK and GEHV…MSDL. Residues 212–232 traverse the membrane as a helical; Anchor for type IV membrane protein segment; the sequence is SLILGAVIGFCVILLLLYAFN.

The protein belongs to the GOSR1 family. In terms of assembly, component of several multiprotein Golgi SNARE complexes.

It is found in the golgi apparatus membrane. Functionally, involved in transport from the ER to the Golgi apparatus as well as in intra-Golgi transport. It belongs to a super-family of proteins called t-SNAREs or soluble NSF (N-ethylmaleimide-sensitive factor) attachment protein receptor. This Drosophila melanogaster (Fruit fly) protein is Golgi SNAP receptor complex member 1 (Gos28).